A 336-amino-acid polypeptide reads, in one-letter code: MIMKISMAMCKQPLPPSPTLDFPPARFGPNMLTLNPYGPKDKVVVIMGATGTGKSRLSVDIATRFRAEIINSDKIQVHQGLDIVTNKITSEESCGVPHHLLGVLPPEADLTAANYCHMANLSIESVLNRGKLPIIVGGSNSYVEALVDDKENKFRSRYDCCFLWVDVALPVLHGFVSERVDKMVESGMVEEVREFFDFSNSDYSRGIKKAIGFPEFDRFFRNEQFLNVEDREELLSKVLEEIKRNTFELACRQREKIERLRKVKKWSIQRVDATPVFTKRRSKMDANVAWERLVAGPSTDTVSRFLLDIASRRPLVEASTAVAAAMERELSRCLVA.

Residues 1–55 constitute a chloroplast transit peptide; it reads MIMKISMAMCKQPLPPSPTLDFPPARFGPNMLTLNPYGPKDKVVVIMGATGTGKS. 48 to 55 contacts ATP; sequence GATGTGKS. Cys-333 is modified (cysteine methyl ester). Cys-333 carries S-farnesyl cysteine lipidation. Residues 334-336 constitute a propeptide, removed in mature form; it reads LVA.

It belongs to the IPP transferase family. Farnesylated. In terms of tissue distribution, expressed the phloem companion cells.

Its subcellular location is the plastid. The protein resides in the chloroplast. It is found in the nucleus membrane. The protein localises to the cytoplasm. The enzyme catalyses dimethylallyl diphosphate + ADP = N(6)-(dimethylallyl)adenosine 5'-diphosphate + diphosphate. It carries out the reaction dimethylallyl diphosphate + ATP = N(6)-(dimethylallyl)adenosine 5'-triphosphate + diphosphate. Its function is as follows. Involved in cytokinin biosynthesis. Catalyzes the transfer of an isopentenyl group from dimethylallyl diphosphate (DMAPP) to ATP and ADP. In Arabidopsis thaliana (Mouse-ear cress), this protein is Adenylate isopentenyltransferase 3, chloroplastic (IPT3).